The primary structure comprises 386 residues: Methionine aminotransferase (386 aa).

Residue K236 is modified to N6-(pyridoxal phosphate)lysine.

The protein belongs to the class-I pyridoxal-phosphate-dependent aminotransferase family. As to quaternary structure, homodimer. It depends on pyridoxal 5'-phosphate as a cofactor.

It localises to the cytoplasm. It catalyses the reaction a 2-oxocarboxylate + L-methionine = 4-methylsulfanyl-2-oxobutanoate + an L-alpha-amino acid. In terms of biological role, shows aminotransferase activity with methionine and histidine as substrates, and to a lesser extent also with phenylalanine. The protein is Methionine aminotransferase (ybdL) of Escherichia coli (strain K12).